Reading from the N-terminus, the 317-residue chain is Transaldolase (317 aa).

Lysine 132 acts as the Schiff-base intermediate with substrate in catalysis.

It belongs to the transaldolase family. Type 1 subfamily. In terms of assembly, homodimer.

The protein resides in the cytoplasm. It catalyses the reaction D-sedoheptulose 7-phosphate + D-glyceraldehyde 3-phosphate = D-erythrose 4-phosphate + beta-D-fructose 6-phosphate. It functions in the pathway carbohydrate degradation; pentose phosphate pathway; D-glyceraldehyde 3-phosphate and beta-D-fructose 6-phosphate from D-ribose 5-phosphate and D-xylulose 5-phosphate (non-oxidative stage): step 2/3. Functionally, transaldolase is important for the balance of metabolites in the pentose-phosphate pathway. The protein is Transaldolase of Histophilus somni (strain 2336) (Haemophilus somnus).